A 574-amino-acid chain; its full sequence is Membralin (574 aa).

A disordered region spans residues 1–27 (MSEHAAAPGPGPNGGGGGGAAPVRGPR). S2 is modified (N-acetylserine). A helical transmembrane segment spans residues 69–89 (FFVLLKALFVLFVLAYIHIVF). N180 is a glycosylation site (N-linked (GlcNAc...) asparagine). A run of 3 helical transmembrane segments spans residues 293-313 (TSYLAAFVIMVIFTLSVSMLL), 337-357 (IAFPAAPLLTVILALVGMEAI), and 417-437 (YSSLALVTSWLFIQHSMIYFF). Composition is skewed to low complexity over residues 461–470 (LGPGTPTALP) and 491–501 (LGPSSSPAPTG). Disordered regions lie at residues 461-515 (LGPG…GASV) and 546-574 (RRPTAPSTPDSSRPDPGVPLEDAPAPAGS).

Belongs to the membralin family. Interacts with ERLIN2. Detected in brain, spinal cord, lung, liver and kidney.

It is found in the endoplasmic reticulum membrane. May have a role in the ERAD pathway required for clearance of misfolded proteins in the endoplasmic reticulum (ER). Promotes survival of motor neurons, probably by protecting against ER stress. The sequence is that of Membralin (Tmem259) from Mus musculus (Mouse).